Here is a 401-residue protein sequence, read N- to C-terminus: Chorismate synthase (401 aa).

Arg-40 and Arg-46 together coordinate NADP(+). Residues 135 to 137, 256 to 257, Gly-300, 315 to 319, and Arg-341 each bind FMN; these read RAS, QA, and KPIST.

Belongs to the chorismate synthase family. In terms of assembly, homotetramer. FMNH2 is required as a cofactor.

It carries out the reaction 5-O-(1-carboxyvinyl)-3-phosphoshikimate = chorismate + phosphate. The protein operates within metabolic intermediate biosynthesis; chorismate biosynthesis; chorismate from D-erythrose 4-phosphate and phosphoenolpyruvate: step 7/7. Catalyzes the anti-1,4-elimination of the C-3 phosphate and the C-6 proR hydrogen from 5-enolpyruvylshikimate-3-phosphate (EPSP) to yield chorismate, which is the branch point compound that serves as the starting substrate for the three terminal pathways of aromatic amino acid biosynthesis. This reaction introduces a second double bond into the aromatic ring system. The protein is Chorismate synthase of Mycobacterium bovis (strain BCG / Pasteur 1173P2).